A 126-amino-acid chain; its full sequence is Holo-[acyl-carrier-protein] synthase (126 aa).

The Mg(2+) site is built by D8 and E57.

The protein belongs to the P-Pant transferase superfamily. AcpS family. The cofactor is Mg(2+).

The protein localises to the cytoplasm. The catalysed reaction is apo-[ACP] + CoA = holo-[ACP] + adenosine 3',5'-bisphosphate + H(+). Transfers the 4'-phosphopantetheine moiety from coenzyme A to a Ser of acyl-carrier-protein. In Halorhodospira halophila (strain DSM 244 / SL1) (Ectothiorhodospira halophila (strain DSM 244 / SL1)), this protein is Holo-[acyl-carrier-protein] synthase.